The sequence spans 563 residues: Phospholipase B-like protein F (563 aa).

Positions 1–21 (MKIINSFVFIFVLLFVFNTNA) are cleaved as a signal peptide. N85, N107, N118, N121, N208, N312, and N537 each carry an N-linked (GlcNAc...) asparagine glycan.

Belongs to the phospholipase B-like family.

It localises to the secreted. Its function is as follows. Probable phospholipase. The protein is Phospholipase B-like protein F (plbF) of Dictyostelium discoideum (Social amoeba).